The following is a 1390-amino-acid chain: Bromodomain adjacent to zinc finger domain protein 2 (1390 aa).

Disordered regions lie at residues 30 to 67 (AKIQKATASSPSKSTNGTSASTSAVPSTSGTSSSQNEA), 178 to 215 (AKKKPAGVASTSSASTSSSTPSTSSASITSSNNNAANN), and 235 to 269 (QKQQQQQKDTQKKADQAKKAKELAKQQQKEQDVKN). A compositionally biased stretch (polar residues) spans 35-45 (ATASSPSKSTN). Low complexity-rich tracts occupy residues 46-63 (GTSASTSAVPSTSGTSSS) and 186-215 (ASTSSASTSSSTPSTSSASITSSNNNAANN). A compositionally biased stretch (basic and acidic residues) spans 243–269 (DTQKKADQAKKAKELAKQQQKEQDVKN). The region spanning 323 to 395 (KTNEAMLRLP…DNFLFNTKLV (73 aa)) is the MBD domain. Residues 524–588 (SQGFADALMV…LRLALEFPGM (65 aa)) enclose the DDT domain. Residues 705–724 (KEEQNHESDSEPPTRPDTPK) show a composition bias toward basic and acidic residues. Residues 705–729 (KEEQNHESDSEPPTRPDTPKKATVA) are disordered. A PHD-type zinc finger spans residues 1100-1149 (EALCQICKSMDGDEMLVCDGCESGCHMECFRPRMTKVPEGDWFCQRCREE). Residues 1218–1241 (EERELEDDNHAENGENTKNGHMNG) are disordered. Positions 1273–1377 (LPKNMNKELC…KFFQKRWKQL (105 aa)) constitute a Bromo domain.

The protein belongs to the WAL family. As to quaternary structure, interacts with set-6. Broadly expressed in the nervous system, including head, body and tail neurons.

The protein resides in the nucleus. The protein localises to the chromosome. Functionally, chromatin reader protein, involved in positively modulating the rate of age-related behavioral deterioration. Positively modulates the level of global trimethylated 'Lys-9' of histone H3 (H3K9me3), but not of H3K9me2 or H3K9me1. May repress the expression of mitochondrial function-related genes by occupying their promoter regions, working in concert with histone methyltransferase, set-6. Involved in modulation of the mitochondrial unfolded protein response (UPR). Negatively regulates expression of bas-1, a serotonin (5-HT) and dopamine synthesizing enzyme (DOPA decarboxylase), with aging. Negatively modulates levels of endogenous 5-HT and dopamine with aging. Involved in modulating longevity, probably as a result of enhanced stress resistance via mechanisms related to dietary restriction and mitochondrial function. The protein is Bromodomain adjacent to zinc finger domain protein 2 of Caenorhabditis elegans.